The chain runs to 270 residues: Outer membrane protein P.IIC (270 aa).

The first 25 residues, 1-25 (MQPAKNLLFSSLLFSSLLFSSAARA), serve as a signal peptide directing secretion. Residues 26–35 (ASEDGGRGPY) are Extracellular-facing. The chain crosses the membrane as a beta stranded span at residues 36–44 (VQADLAYAA). Residues 45–76 (ERITHDYPKPTGTGKNKISTVSDYFRNIRTHS) are Periplasmic-facing. The chain crosses the membrane as a beta stranded span at residues 77–85 (VHPRVSVGY). Residues 86–89 (DFGS) lie on the Extracellular side of the membrane. A beta stranded membrane pass occupies residues 90–96 (WRIAADY). The Periplasmic segment spans residues 97 to 142 (ARYRKWNNNKYSVSIKELLRNDNSASGVRGHLNIQTQKTEHQENGT). The beta stranded transmembrane segment at 143 to 157 (FHAVSSLGLSTIYDF) threads the bilayer. The Extracellular portion of the chain corresponds to 158 to 162 (DTGSR). A beta stranded transmembrane segment spans residues 163–173 (FKPYIGMRVAY). Residues 174–221 (GHVRHQVRSVEQETEIITTYPSNGGGKVSLSSKMPPKSAHHQSNSIRR) are Periplasmic-facing. Positions 194-217 (PSNGGGKVSLSSKMPPKSAHHQSN) are disordered. A beta stranded transmembrane segment spans residues 222 to 234 (VGLGVIAGVGFDI). Residues 235-237 (TPN) lie on the Extracellular side of the membrane. A beta stranded transmembrane segment spans residues 238–246 (LTLDTGYRY). At 247–261 (HNWGRLENTRFKTHE) the chain is on the periplasmic side. The beta stranded transmembrane segment at 262–270 (ASLGMRYRF) threads the bilayer.

Belongs to the opacity porin family. In terms of assembly, homotrimer.

It localises to the cell outer membrane. Its function is as follows. This protein serves as a porin. This Neisseria gonorrhoeae protein is Outer membrane protein P.IIC (piiC).